The sequence spans 316 residues: Ornithine carbamoyltransferase (316 aa).

Residues serine 57–threonine 60, glutamine 84, arginine 108, and histidine 135–glutamine 138 each bind carbamoyl phosphate. Residues asparagine 166, aspartate 230, and serine 234–methionine 235 contribute to the L-ornithine site. Carbamoyl phosphate-binding positions include cysteine 269–leucine 270 and arginine 297.

It belongs to the aspartate/ornithine carbamoyltransferase superfamily. OTCase family.

The protein localises to the cytoplasm. It catalyses the reaction carbamoyl phosphate + L-ornithine = L-citrulline + phosphate + H(+). It functions in the pathway amino-acid degradation; L-arginine degradation via ADI pathway; carbamoyl phosphate from L-arginine: step 2/2. Reversibly catalyzes the transfer of the carbamoyl group from carbamoyl phosphate (CP) to the N(epsilon) atom of ornithine (ORN) to produce L-citrulline. The polypeptide is Ornithine carbamoyltransferase (Bacillus cereus (strain AH187)).